Reading from the N-terminus, the 313-residue chain is Formimidoylglutamase (313 aa).

Positions 130, 155, 157, 159, 241, and 243 each coordinate Mn(2+).

It belongs to the arginase family. The cofactor is Mn(2+).

The catalysed reaction is N-formimidoyl-L-glutamate + H2O = formamide + L-glutamate. It functions in the pathway amino-acid degradation; L-histidine degradation into L-glutamate; L-glutamate from N-formimidoyl-L-glutamate (hydrolase route): step 1/1. Its function is as follows. Catalyzes the conversion of N-formimidoyl-L-glutamate to L-glutamate and formamide. This chain is Formimidoylglutamase, found in Citrobacter koseri (strain ATCC BAA-895 / CDC 4225-83 / SGSC4696).